A 481-amino-acid polypeptide reads, in one-letter code: Argininosuccinate synthase (481 aa).

ATP-binding positions include 17–25 (AFSGGLDTS) and Ala43. Tyr99 provides a ligand contact to L-citrulline. Positions 129 and 131 each coordinate ATP. L-aspartate is bound by residues Thr131, Asn135, and Asp136. L-citrulline is bound at residue Asn135. Asp136 is a binding site for ATP. L-citrulline-binding residues include Arg139 and Ser192. Position 194 (Asp194) interacts with ATP. Positions 201, 203, and 280 each coordinate L-citrulline.

Belongs to the argininosuccinate synthase family. Type 2 subfamily. As to quaternary structure, homotetramer.

It is found in the cytoplasm. It carries out the reaction L-citrulline + L-aspartate + ATP = 2-(N(omega)-L-arginino)succinate + AMP + diphosphate + H(+). It participates in amino-acid biosynthesis; L-arginine biosynthesis; L-arginine from L-ornithine and carbamoyl phosphate: step 2/3. This Streptomyces coelicolor (strain ATCC BAA-471 / A3(2) / M145) protein is Argininosuccinate synthase (argG).